The primary structure comprises 402 residues: Nicotinate phosphoribosyltransferase (402 aa).

Phosphohistidine; by autocatalysis is present on His-221.

Belongs to the NAPRTase family. In terms of processing, transiently phosphorylated on a His residue during the reaction cycle. Phosphorylation strongly increases the affinity for substrates and increases the rate of nicotinate D-ribonucleotide production. Dephosphorylation regenerates the low-affinity form of the enzyme, leading to product release.

The enzyme catalyses nicotinate + 5-phospho-alpha-D-ribose 1-diphosphate + ATP + H2O = nicotinate beta-D-ribonucleotide + ADP + phosphate + diphosphate. It functions in the pathway cofactor biosynthesis; NAD(+) biosynthesis; nicotinate D-ribonucleotide from nicotinate: step 1/1. Catalyzes the synthesis of beta-nicotinate D-ribonucleotide from nicotinate and 5-phospho-D-ribose 1-phosphate at the expense of ATP. This chain is Nicotinate phosphoribosyltransferase, found in Sodalis glossinidius (strain morsitans).